The primary structure comprises 131 residues: Profilin-5 (131 aa).

Belongs to the profilin family. As to quaternary structure, occurs in many kinds of cells as a complex with monomeric actin in a 1:1 ratio.

Its subcellular location is the cytoplasm. It localises to the cytoskeleton. Its function is as follows. Binds to actin and affects the structure of the cytoskeleton. At high concentrations, profilin prevents the polymerization of actin, whereas it enhances it at low concentrations. By binding to PIP2, it inhibits the formation of IP3 and DG. The sequence is that of Profilin-5 from Hevea brasiliensis (Para rubber tree).